The following is a 664-amino-acid chain: Acid beta-fructofuranosidase 4, vacuolar (664 aa).

The Cytoplasmic portion of the chain corresponds to 1–43 (MASSDALLPISAREEEPLCPYTRLPMADPNQETHGPRRRRPFK). The propeptide at 1–108 (MASSDALLPI…WKLSGDRNTP (108 aa)) is removed in mature form. 2 consecutive short sequence motifs (critical for endoplasmic reticulum export) follow at residues 7-8 (LL) and 9-10 (PI). Residues 14–16 (EEE) carry the Critical for trafficking from the trans-Golgi network to the prevacuolar compartment and from the prevacuolar compartment to the central vacuole motif. A helical; Signal-anchor for type II membrane protein membrane pass occupies residues 44-64 (GLLAVSFGLLFIAFYVALIAT). Topologically, residues 65–664 (HDGSRSNDEG…DEAVRALSRT (600 aa)) are lumenal. Asn-113 carries an N-linked (GlcNAc...) asparagine glycan. Substrate-binding positions include 132-135 (WMND), Gln-151, Trp-159, 194-195 (WT), and 258-259 (RD). Asp-135 is an active-site residue. Asn-280 carries N-linked (GlcNAc...) (complex) asparagine glycosylation. Residues Glu-313 and Asp-346 each coordinate substrate. N-linked (GlcNAc...) asparagine glycans are attached at residues Asn-362 and Asn-498. Cysteines 510 and 558 form a disulfide.

Belongs to the glycosyl hydrolase 32 family. May be present in two forms, a 70 kDa monomer and a heterodimer of the 30 kDa and 38 kDa subunits. The ratio of the levels of the two forms within cells appears to be regulated developmentally. Mostly expressed in stems, roots and flowers, and, to a lower extent, in mature leaves.

The protein localises to the vacuole. The protein resides in the endoplasmic reticulum membrane. Its subcellular location is the golgi apparatus membrane. It is found in the golgi apparatus. It localises to the trans-Golgi network membrane. The protein localises to the prevacuolar compartment membrane. The protein resides in the vacuole membrane. Its subcellular location is the vacuole lumen. It carries out the reaction Hydrolysis of terminal non-reducing beta-D-fructofuranoside residues in beta-D-fructofuranosides.. Its pathway is glycan biosynthesis; sucrose metabolism. Its activity is regulated as follows. Inhibited by C/VIF1 and C/VIF2. Possible role in the continued mobilization of sucrose to sink organs. Regulates root elongation. The chain is Acid beta-fructofuranosidase 4, vacuolar from Arabidopsis thaliana (Mouse-ear cress).